The sequence spans 245 residues: Complement C1q subcomponent subunit A (245 aa).

An N-terminal signal peptide occupies residues 1–22; that stretch reads MEGPRGWLVLCVLAISLASMVT. Basic and acidic residues predominate over residues 27–38; it reads RAPDGKKGEAGR. Residues 27–114 form a disordered region; the sequence is RAPDGKKGEA…SPGNIKDQPR (88 aa). Residues 31 to 109 form the Collagen-like domain; sequence GKKGEAGRPG…KGTKGSPGNI (79 aa). At Lys33 the chain carries 5-hydroxylysine. O-linked (Gal...) hydroxylysine glycosylation is present at Lys33. 4-hydroxyproline occurs at positions 39 and 45. Lys48 bears the 5-hydroxylysine mark. Lys48 is a glycosylation site (O-linked (Gal...) hydroxylysine). A 4-hydroxyproline mark is found at Pro54 and Pro57. Lys67 bears the 5-hydroxylysine mark. O-linked (Gal...) hydroxylysine glycosylation occurs at Lys67. Pro73, Pro79, and Pro85 each carry 4-hydroxyproline. Residue Lys100 is modified to 5-hydroxylysine. The O-linked (Gal...) hydroxylysine glycan is linked to Lys100. The 136-residue stretch at 110-245 folds into the C1q domain; sequence KDQPRPAFSA…FSGFLIFPSA (136 aa). An N-linked (GlcNAc...) asparagine glycan is attached at Asn146. Cys172 and Cys190 form a disulfide bridge. Gln199 is a binding site for Ca(2+).

In terms of assembly, core component of the complement C1 complex, a calcium-dependent complex composed of 1 molecule of the C1Q subcomplex, 2 molecules of C1R and 2 molecules of C1S. The C1Q subcomplex is composed 18 subunits: 3 chains of C1QA, C1QB, and C1QC trimerize to form 6 collagen-like triple helices connected to six globular ligand-recognition modules (C1q domain). Interacts with CR1 (via Sushi 24 and Sushi 25 domains). Interacts (via C-terminus) with CD33; this interaction activates CD33 inhibitory motifs. As to quaternary structure, (Microbial infection) Interacts with Staphylococcus aureus protein Cna; this interaction results in the inhibition of the classical complement pathway. In terms of processing, O-linked glycans are assumed to be the Glc-Gal disaccharides typically found as secondary modifications of hydroxylated lysines in collagen-like domains.

The protein resides in the secreted. The protein localises to the cell surface. Its activity is regulated as follows. The C1Q subcomplex is inhibited by sulfated molecules, such as triterpenoid sulfates, heparan sulfate, or chondroitin sulfates. In terms of biological role, core component of the complement C1 complex, a multiprotein complex that initiates the classical pathway of the complement system, a cascade of proteins that leads to phagocytosis and breakdown of pathogens and signaling that strengthens the adaptive immune system. The classical complement pathway is initiated by the C1Q subcomplex of the C1 complex, which specifically binds IgG or IgM immunoglobulins complexed with antigens, forming antigen-antibody complexes on the surface of pathogens: C1QA, together with C1QB and C1QC, specifically recognizes and binds the Fc regions of IgG or IgM via its C1q domain. Immunoglobulin-binding activates the proenzyme C1R, which cleaves C1S, initiating the proteolytic cascade of the complement system. The C1Q subcomplex is activated by a hexamer of IgG complexed with antigens, while it is activated by a pentameric IgM. The C1Q subcomplex also recognizes and binds phosphatidylserine exposed on the surface of cells undergoing programmed cell death, possibly promoting activation of the complement system. The polypeptide is Complement C1q subcomponent subunit A (Homo sapiens (Human)).